Consider the following 382-residue polypeptide: Gas vesicle protein C1 (382 aa).

The span at 1-18 shows a compositional bias: basic and acidic residues; that stretch reads MSVTDKRDEMSTARDKFA. Residues 1 to 21 form a disordered region; sequence MSVTDKRDEMSTARDKFAESQ. 7 repeat units span residues 22–60, 61–92, 93–130, 131–168, 169–200, 201–240, and 241–284. The interval 22-284 is 7 X approximate tandem repeats; the sequence is QEFESYADEF…VEAEAEVSPD (263 aa). Over residues 260-302 the composition is skewed to acidic residues; that stretch reads GAAEAEAEPVEADADVEAEAEVSPDEAGGESAGTEEEETEPAE. Positions 260-382 are disordered; sequence GAAEAEAEPV…DVPLRPDDKT (123 aa). Residues 303–316 show a composition bias toward low complexity; that stretch reads VETAAPEVEGSPAD. Residues 317-336 show a composition bias toward acidic residues; the sequence is TADEAEDTEAEEETEEEAPE. A compositionally biased stretch (basic and acidic residues) spans 365–382; the sequence is EYRDEYGEDVPLRPDDKT.

Belongs to the halobacterial gas vesicle GvpC family. Forms homodimers, interacts with GvpF1, GvpH1, GvpI1, GvpL1, GvpN1 and GvpO1 via its C-terminus (residues 329-382).

The protein localises to the gas vesicle. It localises to the cytoplasm. In terms of biological role, confers stability, involved in shaping gas vesicles. Gas vesicles are hollow, gas filled proteinaceous nanostructures found in several microbial planktonic microorganisms. They allow positioning of halobacteria at the optimal depth for growth in the poorly aerated, shallow brine pools of their habitat. Functionally, expression of a 9.5 kb p-vac DNA fragment containing 2 divergently transcribed regions (gvpD-gvpE-gvpF-gvpG-gvpH-gvpI-gvpJ-gvpK-gvpL-gvpM and gvpA-gvpC-gvpN-gvpO) allows H.volcanii to produce gas vesicles. A similar region restores gas vesicle production in H.halobium without the p-vac locus, but it still has the c-vac locus. This is Gas vesicle protein C1 (gvpC1) from Halobacterium salinarum (strain ATCC 700922 / JCM 11081 / NRC-1) (Halobacterium halobium).